A 319-amino-acid polypeptide reads, in one-letter code: Large ribosomal subunit protein uL29m (319 aa).

The disordered stretch occupies residues 1-55 (MWKRSFHSQGGPLRARTKFTKPKPKQPVLPKDKIRPPTQLTHHSNNLRITEPIPP). A compositionally biased stretch (basic residues) spans 15-24 (ARTKFTKPKP). The span at 38–48 (TQLTHHSNNLR) shows a compositional bias: polar residues.

This sequence belongs to the universal ribosomal protein uL29 family. Component of the mitochondrial large ribosomal subunit. Mature mitochondrial ribosomes consist of a small (37S) and a large (54S) subunit. The 37S subunit contains at least 33 different proteins and 1 molecule of RNA (15S). The 54S subunit contains at least 45 different proteins and 1 molecule of RNA (21S).

It is found in the mitochondrion. In Saccharomyces cerevisiae (strain YJM789) (Baker's yeast), this protein is Large ribosomal subunit protein uL29m (MRPL4).